A 542-amino-acid polypeptide reads, in one-letter code: Homeobox and leucine zipper protein Homez (542 aa).

A DNA-binding region (homeobox 1) is located at residues 55–114 (WTQAIQTSELDGNEHLLQAFSYFPYPSLADIALLCLRHGLQMEKVKTWFMAQRLRCGISW). Residues 165–193 (LSPLAPSEQPTHMKGLKVEPEEPSQVSQL) are disordered. Glycyl lysine isopeptide (Lys-Gly) (interchain with G-Cter in SUMO2) cross-links involve residues lysine 181 and lysine 201. Positions 250 to 307 (VHQPDKPASVSLLDNSCKEESEPSGIPPSSSTSSPSFQALANGTTATPKPLQPLGCIS) are disordered. The span at 272-285 (PSGIPPSSSTSSPS) shows a compositional bias: low complexity. Residues 286 to 296 (FQALANGTTAT) are compositionally biased toward polar residues. Serine 345 bears the Phosphoserine mark. DNA-binding regions (homeobox) lie at residues 349–409 (QHQR…KHGQ) and 443–502 (TPPL…AEVV). Residues 352–357 (RKTKRK) carry the Nuclear localization signal motif. 2 disordered regions span residues 424–454 (FQDPAIPTPSTRSLKEWAKTPPLPAPPPPPD) and 501–542 (VVVC…IIWD). Threonine 443 bears the Phosphothreonine mark. Residues 444–454 (PPLPAPPPPPD) are compositionally biased toward pro residues. Acidic residues predominate over residues 505–542 (LDEEDEEDEEDELPEDGEEEEEEEEDDDDGDDDVIIWD).

Homodimer or heterodimer (Potential). Interacts with HOXC8. Ubiquitous. Strongly expressed in testis.

The protein localises to the nucleus. Its function is as follows. May function as a transcriptional regulator. This chain is Homeobox and leucine zipper protein Homez (Homez), found in Mus musculus (Mouse).